Reading from the N-terminus, the 1039-residue chain is Multidrug resistance protein MdtB (1039 aa).

The next 12 helical transmembrane spans lie at 16-36 (FILR…AGII), 342-362 (DVQF…YVFL), 373-393 (VAVP…GFSI), 396-416 (LTLM…IVVI), 440-460 (IGFT…PLLF), 472-492 (FAVT…TLTP), 537-557 (WLTL…YLLI), 863-883 (LGGT…VLGV), 888-908 (FIHP…ALLA), 911-931 (MAGS…IGIV), 968-988 (ILMT…STGV), and 1002-1022 (GGLV…YLLF).

This sequence belongs to the resistance-nodulation-cell division (RND) (TC 2.A.6) family. MdtB subfamily. As to quaternary structure, part of a tripartite efflux system composed of MdtA, MdtB and MdtC. MdtB forms a heteromultimer with MdtC.

The protein localises to the cell inner membrane. The polypeptide is Multidrug resistance protein MdtB (Serratia proteamaculans (strain 568)).